A 479-amino-acid polypeptide reads, in one-letter code: Zinc metalloproteinase/disintegrin (479 aa).

The first 20 residues, 1 to 20 (MIQVLLVTICLAAFPYQGSS), serve as a signal peptide directing secretion. A propeptide spanning residues 21-187 (IILESGKVND…PIKKASQLIV (167 aa)) is cleaved from the precursor. Residues 193–390 (RYMEIVIVVD…ENPPCILNKP (198 aa)) enclose the Peptidase M12B domain. Residues Glu-196 and Asp-280 each contribute to the Ca(2+) site. Cystine bridges form between Cys-304–Cys-385, Cys-344–Cys-369, and Cys-346–Cys-352. A Zn(2+)-binding site is contributed by His-329. Glu-330 is an active-site residue. The Zn(2+) site is built by His-333 and His-339. Cys-385 and Asn-388 together coordinate Ca(2+). Positions 390–414 (PLRTDTVSTPVSGNELLEAGKDYDR) are excised as a propeptide. Residues 398 to 479 (TPVSGNELLE…ADCPRNPYHA (82 aa)) form the Disintegrin domain. Intrachain disulfides connect Cys-435-Cys-441, Cys-440-Cys-465, and Cys-453-Cys-472. The Cell attachment site motif lies at 457-459 (RGD).

The protein belongs to the venom metalloproteinase (M12B) family. P-II subfamily. P-IIa sub-subfamily. As to quaternary structure, monomer. It depends on Zn(2+) as a cofactor. As to expression, expressed by the venom gland.

Its subcellular location is the secreted. Its function is as follows. Snake venom metalloproteinase that impairs hemostasis in the envenomed animal. Functionally, inhibits platelet aggregation induced by ADP, thrombin, platelet-activating factor and collagen. Acts by inhibiting fibrinogen interaction with platelet receptors GPIIb/GPIIIa (ITGA2B/ITGB3). This Deinagkistrodon acutus (Hundred-pace snake) protein is Zinc metalloproteinase/disintegrin.